The following is a 417-amino-acid chain: UDP-N-acetylmuramoylalanine--D-glutamate ligase (417 aa).

101-107 (GTAGKTS) contacts ATP.

It belongs to the MurCDEF family.

It is found in the cytoplasm. It catalyses the reaction UDP-N-acetyl-alpha-D-muramoyl-L-alanine + D-glutamate + ATP = UDP-N-acetyl-alpha-D-muramoyl-L-alanyl-D-glutamate + ADP + phosphate + H(+). It functions in the pathway cell wall biogenesis; peptidoglycan biosynthesis. In terms of biological role, cell wall formation. Catalyzes the addition of glutamate to the nucleotide precursor UDP-N-acetylmuramoyl-L-alanine (UMA). The protein is UDP-N-acetylmuramoylalanine--D-glutamate ligase of Thermus thermophilus (strain ATCC BAA-163 / DSM 7039 / HB27).